The chain runs to 272 residues: Type II secretion system protein C (272 aa).

Topologically, residues 1–16 (MNISKLPPLSPSVIRR) are cytoplasmic. The helical transmembrane segment at 17–35 (ILFYLLMLLFCQQLAMIFW) threads the bilayer. Residues 36 to 272 (RVGLPDNSPV…DIYMEFGGDE (237 aa)) lie on the Periplasmic side of the membrane.

The protein belongs to the GSP C family.

The protein resides in the cell inner membrane. Its function is as follows. Involved in a type II secretion system (T2SS, formerly general secretion pathway, GSP) for the export of proteins. Required for the translocation of the multiple pectic enzymes. This chain is Type II secretion system protein C (outC), found in Dickeya chrysanthemi (Pectobacterium chrysanthemi).